Consider the following 372-residue polypeptide: Protein RecA (372 aa).

Position 66–73 (66–73) interacts with ATP; the sequence is GPESSGKT. The tract at residues 328 to 359 is disordered; sequence GVGVRPEEPTATESGPDAATAESAPAVPAPAT. A compositionally biased stretch (low complexity) spans 345 to 359; that stretch reads AATAESAPAVPAPAT.

This sequence belongs to the RecA family.

The protein localises to the cytoplasm. Can catalyze the hydrolysis of ATP in the presence of single-stranded DNA, the ATP-dependent uptake of single-stranded DNA by duplex DNA, and the ATP-dependent hybridization of homologous single-stranded DNAs. It interacts with LexA causing its activation and leading to its autocatalytic cleavage. The sequence is that of Protein RecA from Streptomyces ambofaciens.